The sequence spans 281 residues: NAD-dependent protein deacetylase 3 (281 aa).

The 281-residue stretch at 1–281 (MLDSPTLDLL…PWLAEQLITR (281 aa)) folds into the Deacetylase sirtuin-type domain. Residues 27–47 (GAGI…GVRR) and 105–108 (QNVD) contribute to the NAD(+) site. H123 acts as the Proton acceptor in catalysis. Positions 131, 134, 182, and 185 each coordinate Zn(2+). NAD(+) is bound by residues 223 to 225 (GTS), 249 to 251 (NHG), and C267.

This sequence belongs to the sirtuin family. Class II subfamily. It depends on Zn(2+) as a cofactor.

It is found in the cytoplasm. It catalyses the reaction N(6)-acetyl-L-lysyl-[protein] + NAD(+) + H2O = 2''-O-acetyl-ADP-D-ribose + nicotinamide + L-lysyl-[protein]. Functionally, NAD-dependent protein deacetylase which modulates the activities of several enzymes which are inactive in their acetylated form. The protein is NAD-dependent protein deacetylase 3 of Pseudomonas syringae pv. tomato (strain ATCC BAA-871 / DC3000).